We begin with the raw amino-acid sequence, 259 residues long: Malonyl-[acyl-carrier protein] O-methyltransferase (259 aa).

Belongs to the methyltransferase superfamily.

It carries out the reaction malonyl-[ACP] + S-adenosyl-L-methionine = malonyl-[ACP] methyl ester + S-adenosyl-L-homocysteine. Its pathway is cofactor biosynthesis; biotin biosynthesis. Its function is as follows. Converts the free carboxyl group of a malonyl-thioester to its methyl ester by transfer of a methyl group from S-adenosyl-L-methionine (SAM). It allows to synthesize pimeloyl-ACP via the fatty acid synthetic pathway. The protein is Malonyl-[acyl-carrier protein] O-methyltransferase of Anoxybacillus flavithermus (strain DSM 21510 / WK1).